The chain runs to 60 residues: UPF0434 protein YcaR (60 aa).

It belongs to the UPF0434 family.

The polypeptide is UPF0434 protein YcaR (Salmonella agona (strain SL483)).